The primary structure comprises 89 residues: Small ribosomal subunit protein uS14 (89 aa).

It belongs to the universal ribosomal protein uS14 family. Part of the 30S ribosomal subunit. Contacts proteins S3 and S10.

Its function is as follows. Binds 16S rRNA, required for the assembly of 30S particles and may also be responsible for determining the conformation of the 16S rRNA at the A site. In Amoebophilus asiaticus (strain 5a2), this protein is Small ribosomal subunit protein uS14.